Here is a 166-residue protein sequence, read N- to C-terminus: Nicotine metabolites export pump subunit NepB (166 aa).

Helical transmembrane passes span 51-71 (LHAWLYLGSAITTEVTGTVIL), 77-97 (FQLPAQTTAAMALYAFSFFLL), 108-128 (VAYATWSGLGTVAVAFAGAII), and 133-153 (VTLGRITAITAVIGGIVILNL).

It belongs to the drug/metabolite transporter (DMT) superfamily. Small multidrug resistance (SMR) (TC 2.A.7.1) family. NepA/NepB subfamily. In terms of assembly, the efflux pump is composed of NepA and NepB.

It localises to the cell membrane. Functionally, component of an efflux pump responsible for the transport of nicotine breakdown products, in particular methylamine, out of the cell. This pump apparently serves as a metabolic valve for nicotine catabolites and may protect the bacteria from the potentially toxic side effects of these compounds. The polypeptide is Nicotine metabolites export pump subunit NepB (nepB) (Paenarthrobacter nicotinovorans (Arthrobacter nicotinovorans)).